Consider the following 735-residue polypeptide: Transcription initiation factor IIF subunit alpha (735 aa).

6 disordered regions span residues 1–68 (MSRR…EYAE), 165–263 (EYKK…TANL), 297–323 (NEPE…AKRG), 446–465 (KAVA…NSEV), 471–606 (EEFA…HKEP), and 631–674 (PEGE…EETP). Low complexity predominate over residues 33–54 (RMRMGQNGSNSSSPGVPNGDNS). Composition is skewed to basic and acidic residues over residues 59-68 (VKKDDPEYAE) and 165-174 (EYKKKAEQER). Residues 175-219 (STPNSGGMNKSGTVSLNNTVKDGSQTPTVDSVTKDNTANGVNSSI) show a composition bias toward polar residues. Ser198 is subject to Phosphoserine. The residue at position 200 (Thr200) is a Phosphothreonine. The span at 220–238 (PTVTGSSVPPASPTTVSAV) shows a compositional bias: low complexity. Residues 239-263 (ESNGLSNGSTSAANGLDGNASTANL) show a composition bias toward polar residues. 2 stretches are compositionally biased toward acidic residues: residues 453–465 (AMDE…NSEV) and 471–480 (EEFADDEEAP). Basic and acidic residues predominate over residues 487 to 500 (QENKESEQRIKKEM). Residues 513-522 (APSENEEDEL) are compositionally biased toward acidic residues. Ser515 carries the post-translational modification Phosphoserine. The segment covering 523 to 536 (FGEKKIDEDGERIK) has biased composition (basic and acidic residues). Residues Ser560, Ser562, and Ser571 each carry the phosphoserine modification. Basic and acidic residues predominate over residues 564–583 (IENKENESPVKKEEDSDTLS). Basic residues predominate over residues 584–595 (KSKRSSPKKQQK). Positions 636–654 (NPQTTKAVDSSNNASNTVP) are enriched in polar residues. Ser655 is modified (phosphoserine).

This sequence belongs to the TFIIF alpha subunit family. TFIIF is composed of three different subunits: TFG1/RAP74, TFG2/RAP30 and TAF14. In terms of processing, phosphorylated on Ser and other residues by TAF1 and casein kinase II-like kinases.

Its subcellular location is the nucleus. Its function is as follows. TFIIF is a general transcription initiation factor that binds to RNA polymerase II. Its functions include the recruitment of RNA polymerase II to the promoter bound DNA-TBP-TFIIB complex, decreasing the affinity of RNA polymerase II for non-specific DNA, allowing for the subsequent recruitment of TFIIE and TFIIH, and facilitating RNA polymerase II elongation. This chain is Transcription initiation factor IIF subunit alpha (TFG1), found in Saccharomyces cerevisiae (strain ATCC 204508 / S288c) (Baker's yeast).